We begin with the raw amino-acid sequence, 600 residues long: Proline--tRNA ligase (600 aa).

Belongs to the class-II aminoacyl-tRNA synthetase family. ProS type 1 subfamily. Homodimer.

The protein localises to the cytoplasm. It catalyses the reaction tRNA(Pro) + L-proline + ATP = L-prolyl-tRNA(Pro) + AMP + diphosphate. Its function is as follows. Catalyzes the attachment of proline to tRNA(Pro) in a two-step reaction: proline is first activated by ATP to form Pro-AMP and then transferred to the acceptor end of tRNA(Pro). As ProRS can inadvertently accommodate and process non-cognate amino acids such as alanine and cysteine, to avoid such errors it has two additional distinct editing activities against alanine. One activity is designated as 'pretransfer' editing and involves the tRNA(Pro)-independent hydrolysis of activated Ala-AMP. The other activity is designated 'posttransfer' editing and involves deacylation of mischarged Ala-tRNA(Pro). The misacylated Cys-tRNA(Pro) is not edited by ProRS. In Prochlorococcus marinus (strain AS9601), this protein is Proline--tRNA ligase.